The primary structure comprises 371 residues: Cyanide hydratase (371 aa).

Residues 8–286 (YKAAAVQAEP…EGLMFVEIDL (279 aa)) form the CN hydrolase domain. Glu-48 acts as the Proton acceptor in catalysis. Residue Lys-130 is part of the active site. The active-site Nucleophile is the Cys-165. The interval 326 to 356 (DGGIGTYNTQDRVGLNRPLDAPKVDGPSGVS) is disordered.

The protein belongs to the carbon-nitrogen hydrolase superfamily. Nitrilase family. As to quaternary structure, oligomer of dimers, forming left-handed helical fibers.

The catalysed reaction is formamide = hydrogen cyanide + H2O. Functionally, catalyzes the hydration of cyanide to formamide. Degradation of cyanide may be important for plant pathogenic fungi in infection of cyanogenic plants. Can also transform some nitriles like 2-cyanopyridine and fumaronitrile and has a minor activity with 4-cyanophenyl acetonitrile (4-CPA). This chain is Cyanide hydratase, found in Botryotinia fuckeliana (strain T4) (Noble rot fungus).